A 469-amino-acid polypeptide reads, in one-letter code: MTTSVRTRFAPSPTGFIHLGNIRSALYPWAFARKMKGTFVLRIEDTDVERSTSESVDAILEGMAWLGLDFDEGPFYQMQRMDRYREVLKQMQDAGLVYPCYMSTEELDALRERQREAGEKPRYDGTWRPEPGKVLPEPPAGVQPVLRFRNPLTGVVAWDDAVKGRIEISNEELDDLVIARPDGTPTYNFCVVVDDLDMRITHVIRGDDHVNNTPRQINILRALGGEPPVYAHLPTVLNEQGEKMSKRHGAMSVVGYRDAGFLPEAVVNYLARLGWSHGDAEIFSREQFVEWFDLEHLGKSPAQYDHDKLAWLNAHYIKEADNARLAELAKPFFAELGIDEAALAQGADLAAVVGLLKDRASTVKEIAENAAMFYRTPAPDAESLAQHVTDVVRPALADLAAALKTVEWTKEAIAAALKATLGAHKLKMPQLAMPVRLLVAGTTHTPSIDSVLMLFGRDVVVGRIEKALV.

Positions 11–21 (PSPTGFIHLGN) match the 'HIGH' region motif. Basic and acidic residues predominate over residues 114 to 131 (QREAGEKPRYDGTWRPEP). Residues 114 to 139 (QREAGEKPRYDGTWRPEPGKVLPEPP) form a disordered region. The short motif at 243-247 (KMSKR) is the 'KMSKS' region element. Residue Lys246 participates in ATP binding.

It belongs to the class-I aminoacyl-tRNA synthetase family. Glutamate--tRNA ligase type 1 subfamily. Monomer.

Its subcellular location is the cytoplasm. It carries out the reaction tRNA(Glu) + L-glutamate + ATP = L-glutamyl-tRNA(Glu) + AMP + diphosphate. Its function is as follows. Catalyzes the attachment of glutamate to tRNA(Glu) in a two-step reaction: glutamate is first activated by ATP to form Glu-AMP and then transferred to the acceptor end of tRNA(Glu). This chain is Glutamate--tRNA ligase, found in Paraburkholderia phytofirmans (strain DSM 17436 / LMG 22146 / PsJN) (Burkholderia phytofirmans).